The following is a 393-amino-acid chain: Selenide, water dikinase (393 aa).

Residues 1–21 (MSEKEGKVIPETNGMKRPRFD) are disordered. The active site involves Cys-42. ATP contacts are provided by residues Lys-45, 68–70 (GMD), Asp-93, Asp-116, and 167–170 (GGQT). Residue Asp-70 participates in Mg(2+) binding. Asp-116 contacts Mg(2+). Mg(2+) is bound at residue Asp-273.

The protein belongs to the selenophosphate synthase 1 family. Class I subfamily. In terms of assembly, homodimer. Mg(2+) serves as cofactor.

The enzyme catalyses hydrogenselenide + ATP + H2O = selenophosphate + AMP + phosphate + 2 H(+). In terms of biological role, synthesizes selenophosphate from selenide and ATP. The chain is Selenide, water dikinase from Trypanosoma brucei brucei (strain 927/4 GUTat10.1).